The primary structure comprises 238 residues: MRLTSQVLSDAPTIINPEKQVTLSLRSLKIPYLENLGITKDTYEVIDLTDNELIELSNFPRLKNLKVLLVGNNNITGINDDKLPNNLPHLQSISFIHNNISKFSDVRILCRFKNLSNITFIENPITDSPNYRYFIVWLIPTLKVLDFSKVKQKELVKAKELFGESIDDPSELALSMLEDISTTESRKNQISSKDIRNLQDVGKKLTDEDKAKLLQELETADSVEDIERIERALHNGHM.

LRR repeat units follow at residues 19–40, 42–63, 64–84, and 89–110; these read KQVT…GITK, TYEV…PRLK, NLKV…DKLP, and HLQS…RILC. The 39-residue stretch at 123–161 folds into the LRRCT domain; the sequence is NPITDSPNYRYFIVWLIPTLKVLDFSKVKQKELVKAKEL.

This sequence belongs to the U2 small nuclear ribonucleoprotein A family. In terms of assembly, associated with the spliceosome.

The protein localises to the nucleus. Functionally, involved in pre-mRNA splicing. This chain is U2 small nuclear ribonucleoprotein A' (LEA1), found in Debaryomyces hansenii (strain ATCC 36239 / CBS 767 / BCRC 21394 / JCM 1990 / NBRC 0083 / IGC 2968) (Yeast).